Consider the following 219-residue polypeptide: Cytidylate kinase (219 aa).

Glycine 15–threonine 23 contacts ATP.

Belongs to the cytidylate kinase family. Type 1 subfamily.

It is found in the cytoplasm. It catalyses the reaction CMP + ATP = CDP + ADP. The catalysed reaction is dCMP + ATP = dCDP + ADP. The protein is Cytidylate kinase of Brucella melitensis biotype 1 (strain ATCC 23456 / CCUG 17765 / NCTC 10094 / 16M).